The sequence spans 141 residues: Succinate dehydrogenase assembly factor 2, mitochondrial (141 aa).

It belongs to the SDHAF2 family. As to quaternary structure, interacts with the flavoprotein subunit within the SDH catalytic dimer.

It localises to the mitochondrion matrix. Its function is as follows. Plays an essential role in the assembly of succinate dehydrogenase (SDH), an enzyme complex (also referred to as respiratory complex II) that is a component of both the tricarboxylic acid (TCA) cycle and the mitochondrial electron transport chain, and which couples the oxidation of succinate to fumarate with the reduction of ubiquinone (coenzyme Q) to ubiquinol. Required for flavinylation (covalent attachment of FAD) of the flavoprotein subunit of the SDH catalytic dimer. The chain is Succinate dehydrogenase assembly factor 2, mitochondrial from Dictyostelium discoideum (Social amoeba).